A 952-amino-acid chain; its full sequence is Isoleucine--tRNA ligase (952 aa).

Positions proline 58–histidine 68 match the 'HIGH' region motif. Glutamate 576 serves as a coordination point for L-isoleucyl-5'-AMP. The short motif at lysine 617 to serine 621 is the 'KMSKS' region element. Residue lysine 620 participates in ATP binding. Zn(2+) is bound by residues cysteine 915, cysteine 918, cysteine 935, and cysteine 938.

The protein belongs to the class-I aminoacyl-tRNA synthetase family. IleS type 1 subfamily. As to quaternary structure, monomer. Zn(2+) serves as cofactor.

It is found in the cytoplasm. It carries out the reaction tRNA(Ile) + L-isoleucine + ATP = L-isoleucyl-tRNA(Ile) + AMP + diphosphate. Functionally, catalyzes the attachment of isoleucine to tRNA(Ile). As IleRS can inadvertently accommodate and process structurally similar amino acids such as valine, to avoid such errors it has two additional distinct tRNA(Ile)-dependent editing activities. One activity is designated as 'pretransfer' editing and involves the hydrolysis of activated Val-AMP. The other activity is designated 'posttransfer' editing and involves deacylation of mischarged Val-tRNA(Ile). This is Isoleucine--tRNA ligase from Aliivibrio fischeri (strain MJ11) (Vibrio fischeri).